Here is a 295-residue protein sequence, read N- to C-terminus: NAD kinase (295 aa).

The active-site Proton acceptor is the Asp72. Residues 72 to 73 (DG), 146 to 147 (ND), Arg157, Lys174, Asp176, 187 to 192 (TAYALS), and Gln247 each bind NAD(+).

Belongs to the NAD kinase family. The cofactor is a divalent metal cation.

The protein resides in the cytoplasm. It catalyses the reaction NAD(+) + ATP = ADP + NADP(+) + H(+). Functionally, involved in the regulation of the intracellular balance of NAD and NADP, and is a key enzyme in the biosynthesis of NADP. Catalyzes specifically the phosphorylation on 2'-hydroxyl of the adenosine moiety of NAD to yield NADP. The chain is NAD kinase from Azotobacter vinelandii (strain DJ / ATCC BAA-1303).